A 360-amino-acid polypeptide reads, in one-letter code: Phospho-N-acetylmuramoyl-pentapeptide-transferase (360 aa).

At Met-1–Arg-25 the chain is on the periplasmic side. The helical transmembrane segment at Ala-26–Ala-46 threads the bilayer. Residues Arg-47–Thr-71 lie on the Cytoplasmic side of the membrane. Residues Pro-72–Tyr-92 form a helical membrane-spanning segment. Pro-93 is a topological domain (periplasmic). Residues Ser-94–Val-114 traverse the membrane as a helical segment. Residues Asp-115 to Arg-131 are Cytoplasmic-facing. A helical membrane pass occupies residues Trp-132–Gly-152. At Lys-153 to Asp-167 the chain is on the periplasmic side. A helical membrane pass occupies residues Val-168–Gly-188. Over Asn-189–Asp-198 the chain is Cytoplasmic. A helical transmembrane segment spans residues Gly-199–Thr-219. Over Gly-220–His-235 the chain is Periplasmic. Residues Ala-236 to Phe-256 form a helical membrane-spanning segment. Residues Asn-257–Gln-262 are Cytoplasmic-facing. A helical transmembrane segment spans residues Val-263–Leu-283. Residues Leu-284–Glu-287 are Periplasmic-facing. Residues Phe-288–Val-308 form a helical membrane-spanning segment. Topologically, residues Gly-309–Arg-337 are cytoplasmic. Residues Val-338–Lys-358 traverse the membrane as a helical segment. The Periplasmic segment spans residues Val-359 to Arg-360.

It belongs to the glycosyltransferase 4 family. MraY subfamily. Requires Mg(2+) as cofactor.

Its subcellular location is the cell inner membrane. It catalyses the reaction UDP-N-acetyl-alpha-D-muramoyl-L-alanyl-gamma-D-glutamyl-meso-2,6-diaminopimeloyl-D-alanyl-D-alanine + di-trans,octa-cis-undecaprenyl phosphate = di-trans,octa-cis-undecaprenyl diphospho-N-acetyl-alpha-D-muramoyl-L-alanyl-D-glutamyl-meso-2,6-diaminopimeloyl-D-alanyl-D-alanine + UMP. The protein operates within cell wall biogenesis; peptidoglycan biosynthesis. In terms of biological role, catalyzes the initial step of the lipid cycle reactions in the biosynthesis of the cell wall peptidoglycan: transfers peptidoglycan precursor phospho-MurNAc-pentapeptide from UDP-MurNAc-pentapeptide onto the lipid carrier undecaprenyl phosphate, yielding undecaprenyl-pyrophosphoryl-MurNAc-pentapeptide, known as lipid I. The polypeptide is Phospho-N-acetylmuramoyl-pentapeptide-transferase (Salmonella agona (strain SL483)).